The primary structure comprises 514 residues: Putative thymidine phosphorylase (514 aa).

It belongs to the thymidine/pyrimidine-nucleoside phosphorylase family. Type 2 subfamily.

The enzyme catalyses thymidine + phosphate = 2-deoxy-alpha-D-ribose 1-phosphate + thymine. This Rhodopseudomonas palustris (strain ATCC BAA-98 / CGA009) protein is Putative thymidine phosphorylase.